A 398-amino-acid polypeptide reads, in one-letter code: ATP-dependent RNA helicase eIF4A (398 aa).

The Q motif signature appears at 25 to 53; that stretch reads DSFDSMDLKPELLRGVYAYGFERPSAIQQ. The Helicase ATP-binding domain occupies 56 to 226; the sequence is IKPIIAGHDV…TKFMRDPIRI (171 aa). An ATP-binding site is contributed by 69-76; the sequence is AQSGTGKT. Positions 174–177 match the DEAD box motif; that stretch reads DEAD. The Helicase C-terminal domain maps to 237–398; the sequence is GIKQFYIAVE…EMPMNVADLI (162 aa).

This sequence belongs to the DEAD box helicase family. eIF4A subfamily. Component of the eIF4F complex, which composition varies with external and internal environmental conditions. It is composed of at least eIF4A, eIF4E and eIF4G.

It is found in the cytoplasm. It carries out the reaction ATP + H2O = ADP + phosphate + H(+). Functionally, ATP-dependent RNA helicase which is a subunit of the eIF4F complex involved in cap recognition and is required for mRNA binding to ribosome. In the current model of translation initiation, eIF4A unwinds RNA secondary structures in the 5'-UTR of mRNAs which is necessary to allow efficient binding of the small ribosomal subunit, and subsequent scanning for the initiator codon. This is ATP-dependent RNA helicase eIF4A (tif1) from Aspergillus niger (strain ATCC MYA-4892 / CBS 513.88 / FGSC A1513).